Consider the following 283-residue polypeptide: NAD kinase (283 aa).

Asp68 (proton acceptor) is an active-site residue. NAD(+) is bound by residues 68–69, 142–143, Arg153, Asp172, 183–188, and Gln242; these read DG, ND, and TAYSLS.

The protein belongs to the NAD kinase family. The cofactor is a divalent metal cation.

The protein resides in the cytoplasm. It catalyses the reaction NAD(+) + ATP = ADP + NADP(+) + H(+). Involved in the regulation of the intracellular balance of NAD and NADP, and is a key enzyme in the biosynthesis of NADP. Catalyzes specifically the phosphorylation on 2'-hydroxyl of the adenosine moiety of NAD to yield NADP. The polypeptide is NAD kinase (Caldanaerobacter subterraneus subsp. tengcongensis (strain DSM 15242 / JCM 11007 / NBRC 100824 / MB4) (Thermoanaerobacter tengcongensis)).